The following is a 230-amino-acid chain: Urease accessory protein UreG (230 aa).

A GTP-binding site is contributed by 33–40 (GPVGSGKT).

This sequence belongs to the SIMIBI class G3E GTPase family. UreG subfamily. As to quaternary structure, homodimer. UreD, UreF and UreG form a complex that acts as a GTP-hydrolysis-dependent molecular chaperone, activating the urease apoprotein by helping to assemble the nickel containing metallocenter of UreC. The UreE protein probably delivers the nickel.

Its subcellular location is the cytoplasm. In terms of biological role, facilitates the functional incorporation of the urease nickel metallocenter. This process requires GTP hydrolysis, probably effectuated by UreG. The sequence is that of Urease accessory protein UreG from Mycobacteroides abscessus (strain ATCC 19977 / DSM 44196 / CCUG 20993 / CIP 104536 / JCM 13569 / NCTC 13031 / TMC 1543 / L948) (Mycobacterium abscessus).